An 828-amino-acid chain; its full sequence is Periplasmic nitrate reductase (828 aa).

A signal peptide (tat-type signal) is located at residues 1 to 31; sequence MKLSRRSFMKANAVAAAAAAAGLSVPGVARA. Residues 39 to 95 enclose the 4Fe-4S Mo/W bis-MGD-type domain; that stretch reads IKWDKAPCRFCGTGCGVLVGTQQGRVVACQGDPDAPVNRGLNCIKGYFLPKIMYGKD. [4Fe-4S] cluster-binding residues include Cys46, Cys49, Cys53, and Cys81. Residues Lys83, Gln150, Asn175, Cys179, 212–219, 243–247, 262–264, Met372, Gln376, Asn482, 508–509, Lys531, Asp558, and 718–727 each bind Mo-bis(molybdopterin guanine dinucleotide); these read WGSNMAEM, STYQH, QSD, SD, and TGRVLEHWHT. Position 794 (Phe794) interacts with substrate. Mo-bis(molybdopterin guanine dinucleotide)-binding residues include Asn802 and Lys819.

It belongs to the prokaryotic molybdopterin-containing oxidoreductase family. NasA/NapA/NarB subfamily. As to quaternary structure, component of the periplasmic nitrate reductase NapAB complex composed of NapA and NapB. [4Fe-4S] cluster is required as a cofactor. Mo-bis(molybdopterin guanine dinucleotide) serves as cofactor. In terms of processing, predicted to be exported by the Tat system. The position of the signal peptide cleavage has not been experimentally proven.

Its subcellular location is the periplasm. It carries out the reaction 2 Fe(II)-[cytochrome] + nitrate + 2 H(+) = 2 Fe(III)-[cytochrome] + nitrite + H2O. Its function is as follows. Catalytic subunit of the periplasmic nitrate reductase complex NapAB. Receives electrons from NapB and catalyzes the reduction of nitrate to nitrite. The protein is Periplasmic nitrate reductase of Escherichia coli O81 (strain ED1a).